A 243-amino-acid chain; its full sequence is Leucyl/phenylalanyl-tRNA--protein transferase (243 aa).

Belongs to the L/F-transferase family.

Its subcellular location is the cytoplasm. It catalyses the reaction N-terminal L-lysyl-[protein] + L-leucyl-tRNA(Leu) = N-terminal L-leucyl-L-lysyl-[protein] + tRNA(Leu) + H(+). The enzyme catalyses N-terminal L-arginyl-[protein] + L-leucyl-tRNA(Leu) = N-terminal L-leucyl-L-arginyl-[protein] + tRNA(Leu) + H(+). It carries out the reaction L-phenylalanyl-tRNA(Phe) + an N-terminal L-alpha-aminoacyl-[protein] = an N-terminal L-phenylalanyl-L-alpha-aminoacyl-[protein] + tRNA(Phe). Functionally, functions in the N-end rule pathway of protein degradation where it conjugates Leu, Phe and, less efficiently, Met from aminoacyl-tRNAs to the N-termini of proteins containing an N-terminal arginine or lysine. In Vibrio cholerae serotype O1 (strain ATCC 39541 / Classical Ogawa 395 / O395), this protein is Leucyl/phenylalanyl-tRNA--protein transferase.